The following is a 120-amino-acid chain: Large ribosomal subunit protein bL19 (120 aa).

The protein belongs to the bacterial ribosomal protein bL19 family.

This protein is located at the 30S-50S ribosomal subunit interface and may play a role in the structure and function of the aminoacyl-tRNA binding site. This Rippkaea orientalis (strain PCC 8801 / RF-1) (Cyanothece sp. (strain PCC 8801)) protein is Large ribosomal subunit protein bL19.